A 311-amino-acid polypeptide reads, in one-letter code: Ornithine carbamoyltransferase (311 aa).

Residues 54–57, Gln81, Arg105, and 132–135 contribute to the carbamoyl phosphate site; these read STRT and HPCQ. Residues Asn163, Asp221, and 225 to 226 contribute to the L-ornithine site; that span reads SM. Carbamoyl phosphate contacts are provided by residues 261 to 262 and Arg289; that span reads CL.

Belongs to the aspartate/ornithine carbamoyltransferase superfamily. OTCase family.

The protein localises to the cytoplasm. It catalyses the reaction carbamoyl phosphate + L-ornithine = L-citrulline + phosphate + H(+). Its pathway is amino-acid degradation; L-arginine degradation via ADI pathway; carbamoyl phosphate from L-arginine: step 2/2. Functionally, reversibly catalyzes the transfer of the carbamoyl group from carbamoyl phosphate (CP) to the N(epsilon) atom of ornithine (ORN) to produce L-citrulline. The chain is Ornithine carbamoyltransferase from Azoarcus sp. (strain BH72).